Here is a 365-residue protein sequence, read N- to C-terminus: Cobalt-precorrin-5B C(1)-methyltransferase (365 aa).

This sequence belongs to the CbiD family.

The enzyme catalyses Co-precorrin-5B + S-adenosyl-L-methionine = Co-precorrin-6A + S-adenosyl-L-homocysteine. Its pathway is cofactor biosynthesis; adenosylcobalamin biosynthesis; cob(II)yrinate a,c-diamide from sirohydrochlorin (anaerobic route): step 6/10. Its function is as follows. Catalyzes the methylation of C-1 in cobalt-precorrin-5B to form cobalt-precorrin-6A. The protein is Cobalt-precorrin-5B C(1)-methyltransferase of Clostridium perfringens (strain ATCC 13124 / DSM 756 / JCM 1290 / NCIMB 6125 / NCTC 8237 / Type A).